The sequence spans 61 residues: Small ribosomal subunit protein uS14 (61 aa).

4 residues coordinate Zn(2+): Cys24, Cys27, Cys40, and Cys43.

This sequence belongs to the universal ribosomal protein uS14 family. Zinc-binding uS14 subfamily. Part of the 30S ribosomal subunit. Contacts proteins S3 and S10. Zn(2+) serves as cofactor.

In terms of biological role, binds 16S rRNA, required for the assembly of 30S particles and may also be responsible for determining the conformation of the 16S rRNA at the A site. The polypeptide is Small ribosomal subunit protein uS14 (Treponema pallidum (strain Nichols)).